A 93-amino-acid chain; its full sequence is Small ribosomal subunit protein uS19 (93 aa).

This sequence belongs to the universal ribosomal protein uS19 family.

Functionally, protein S19 forms a complex with S13 that binds strongly to the 16S ribosomal RNA. This chain is Small ribosomal subunit protein uS19, found in Rubrobacter xylanophilus (strain DSM 9941 / JCM 11954 / NBRC 16129 / PRD-1).